A 481-amino-acid polypeptide reads, in one-letter code: Phosphoglycerate kinase, chloroplastic (481 aa).

The N-terminal 75 residues, 1–75, are a transit peptide targeting the chloroplast; sequence MASATASHTL…SSKPIRGVAS (75 aa). (2R)-3-phosphoglycerate is bound by residues Ala-98, Asp-99, Asn-101, Arg-115, Ser-137, His-138, Gly-140, Arg-141, Arg-196, His-228, and Arg-229. Gly-274 is a binding site for ADP. Gly-274 contacts CDP. AMP contacts are provided by Lys-276 and Lys-280. Lys-280 is an ATP binding site. Gly-298 serves as a coordination point for ADP. Gly-298 contacts CDP. The AMP site is built by Gly-299 and Gly-371. ATP-binding residues include Gly-299 and Gly-371. Residues Gly-396 and Phe-401 each coordinate CDP. Phe-401 contacts ADP. Glu-402 is a binding site for AMP. Glu-402, Asp-433, and Ser-434 together coordinate ATP. Residue Asp-433 participates in Mg(2+) binding.

Belongs to the phosphoglycerate kinase family. In terms of assembly, monomer. The cofactor is Mg(2+).

It localises to the plastid. It is found in the chloroplast. It carries out the reaction (2R)-3-phosphoglycerate + ATP = (2R)-3-phospho-glyceroyl phosphate + ADP. It participates in carbohydrate biosynthesis; Calvin cycle. This Nicotiana tabacum (Common tobacco) protein is Phosphoglycerate kinase, chloroplastic.